We begin with the raw amino-acid sequence, 161 residues long: S-protein homolog 2 (161 aa).

An N-terminal signal peptide occupies residues 1–24 (MDIPKQYLSLFILIIFITTKLSQA). Residues Asn-75, Asn-106, and Asn-157 are each glycosylated (N-linked (GlcNAc...) asparagine).

Belongs to the plant self-incompatibility (S1) protein family.

The protein resides in the secreted. The protein is S-protein homolog 2 of Arabidopsis thaliana (Mouse-ear cress).